Consider the following 118-residue polypeptide: Endoribonuclease MazF9 (118 aa).

This sequence belongs to the PemK/MazF family. Forms a complex with cognate antitoxin MazE9.

Functionally, toxic component of a type II toxin-antitoxin (TA) system. Upon expression in E.coli and M.smegmatis inhibits cell growth and colony formation. Its toxic effect is neutralized by coexpression with cognate antitoxin MazE9. Acts as an mRNA interferase, specifically cleaving between U and C in UAC sequences. May cleave its cognate antitoxin's gene. In E.coli expression with non-cognate antitoxins VapB27 and VapB40 partially neutralizes the toxin. This is Endoribonuclease MazF9 (mazF9) from Mycobacterium tuberculosis (strain ATCC 25618 / H37Rv).